A 130-amino-acid polypeptide reads, in one-letter code: Nascent polypeptide-associated complex protein (130 aa).

Positions Pro8 to Lys75 constitute an NAC-A/B domain.

Belongs to the NAC-alpha family. In terms of assembly, homodimer. Interacts with the ribosome. Binds ribosomal RNA.

Contacts the emerging nascent chain on the ribosome. This Methanococcus aeolicus (strain ATCC BAA-1280 / DSM 17508 / OCM 812 / Nankai-3) protein is Nascent polypeptide-associated complex protein.